A 294-amino-acid polypeptide reads, in one-letter code: N-acetylmuramic acid 6-phosphate etherase (294 aa).

Positions 54–217 (VTKSFEEEGR…STASMIGVGK (164 aa)) constitute an SIS domain. The Proton donor role is filled by Glu-82. Glu-113 is an active-site residue.

Belongs to the GCKR-like family. MurNAc-6-P etherase subfamily. Homodimer.

The enzyme catalyses N-acetyl-D-muramate 6-phosphate + H2O = N-acetyl-D-glucosamine 6-phosphate + (R)-lactate. It participates in amino-sugar metabolism; N-acetylmuramate degradation. Specifically catalyzes the cleavage of the D-lactyl ether substituent of MurNAc 6-phosphate, producing GlcNAc 6-phosphate and D-lactate. This Bacillus mycoides (strain KBAB4) (Bacillus weihenstephanensis) protein is N-acetylmuramic acid 6-phosphate etherase.